Reading from the N-terminus, the 541-residue chain is Atrial natriuretic peptide receptor 3 (541 aa).

Positions 1–26 (MPSLLVLTFSPCVLLGWALLAGGTGG) are cleaved as a signal peptide. At 27–481 (GGVGGGGGGA…PCKSSGGLEE (455 aa)) the chain is on the extracellular side. Asn-86 carries N-linked (GlcNAc...) (complex) asparagine glycosylation. Ser-106, Val-135, and Cys-136 together coordinate chloride. Disulfide bonds link Cys-108–Cys-136 and Cys-213–Cys-261. The N-linked (GlcNAc...) (high mannose) asparagine glycan is linked to Asn-293. The N-linked (GlcNAc...) (complex) asparagine glycan is linked to Asn-394. The chain crosses the membrane as a helical span at residues 482-504 (SAVTGIVVGALLGAGLLMAFYFF). Residues 505–541 (RKKYRITIERRTQQEESNLGKHRELREDSIRSHFSVA) lie on the Cytoplasmic side of the membrane.

Belongs to the ANF receptor family. Homodimer; disulfide-linked. Dimers can also be formed through the C-terminal cysteine of isoform 2. Interacts with OSTN.

It localises to the cell membrane. Receptor for the natriuretic peptide hormones, binding with similar affinities atrial natriuretic peptide NPPA/ANP, brain natriuretic peptide NPPB/BNP, and C-type natriuretic peptide NPPC/CNP. May function as a clearance receptor for NPPA, NPPB and NPPC, regulating their local concentrations and effects. Acts as a regulator of osteoblast differentiation and bone growth by binding to its ligand osteocrin, thereby preventing binding between NPR3/NPR-C and natriuretic peptides, leading to increase cGMP production. This is Atrial natriuretic peptide receptor 3 (NPR3) from Homo sapiens (Human).